The chain runs to 449 residues: Tubulin alpha-1C chain (449 aa).

Residues 1–4 (MREC) carry the MREC motif motif. Gln-11 lines the GTP pocket. At Lys-40 the chain carries N6-acetyllysine. Residues Glu-71, Ser-140, Gly-144, Thr-145, Thr-179, Asn-206, and Asn-228 each contribute to the GTP site. Glu-71 is a Mg(2+) binding site. The active site involves Glu-254. Tyr-282 is modified (3'-nitrotyrosine). The residue at position 432 (Tyr-432) is a Phosphotyrosine. At Ser-439 the chain carries Phosphoserine. Tyr-449 is modified (3'-nitrotyrosine).

This sequence belongs to the tubulin family. In terms of assembly, dimer of alpha and beta chains. A typical microtubule is a hollow water-filled tube with an outer diameter of 25 nm and an inner diameter of 15 nM. Alpha-beta heterodimers associate head-to-tail to form protofilaments running lengthwise along the microtubule wall with the beta-tubulin subunit facing the microtubule plus end conferring a structural polarity. Microtubules usually have 13 protofilaments but different protofilament numbers can be found in some organisms and specialized cells. Mg(2+) serves as cofactor. In terms of processing, some glutamate residues at the C-terminus are polyglycylated, resulting in polyglycine chains on the gamma-carboxyl group. Glycylation is mainly limited to tubulin incorporated into axonemes (cilia and flagella) whereas glutamylation is prevalent in neuronal cells, centrioles, axonemes, and the mitotic spindle. Both modifications can coexist on the same protein on adjacent residues, and lowering polyglycylation levels increases polyglutamylation, and reciprocally. Cilia and flagella glycylation is required for their stability and maintenance. Flagella glycylation controls sperm motility. Post-translationally, some glutamate residues at the C-terminus are polyglutamylated, resulting in polyglutamate chains on the gamma-carboxyl group. Polyglutamylation plays a key role in microtubule severing by spastin (SPAST). SPAST preferentially recognizes and acts on microtubules decorated with short polyglutamate tails: severing activity by SPAST increases as the number of glutamates per tubulin rises from one to eight, but decreases beyond this glutamylation threshold. Glutamylation is also involved in cilia motility. Acetylation of alpha chains at Lys-40 is located inside the microtubule lumen. This modification has been correlated with increased microtubule stability, intracellular transport and ciliary assembly. In terms of processing, methylation of alpha chains at Lys-40 is found in mitotic microtubules and is required for normal mitosis and cytokinesis contributing to genomic stability. Post-translationally, nitration of Tyr-449 is irreversible and interferes with normal dynein intracellular distribution. Undergoes a tyrosination/detyrosination cycle, the cyclic removal and re-addition of a C-terminal tyrosine residue by the enzymes tubulin tyrosine carboxypeptidase (MATCAP1, VASH1 or VASH2) and tubulin tyrosine ligase (TTL), respectively. In terms of processing, tyrosination promotes microtubule interaction with CAP-Gly domain-containing proteins such as CLIP1, CLIP2 and DCTN1. Tyrosination regulates the initiation of dynein-dynactin motility via interaction with DCTN1, which brings the dynein-dynactin complex into contact with microtubules. In neurons, tyrosinated tubulins mediate the initiation of retrograde vesicle transport. Post-translationally, detyrosination is involved in metaphase plate congression by guiding chromosomes during mitosis: detyrosination promotes interaction with CENPE, promoting pole-proximal transport of chromosomes toward the equator. Detyrosination increases microtubules-dependent mechanotransduction in dystrophic cardiac and skeletal muscle. In cardiomyocytes, detyrosinated microtubules are required to resist to contractile compression during contraction: detyrosination promotes association with desmin (DES) at force-generating sarcomeres, leading to buckled microtubules and mechanical resistance to contraction. In terms of tissue distribution, minor alpha-tubulin expressed in all tissues.

Its subcellular location is the cytoplasm. The protein resides in the cytoskeleton. The catalysed reaction is GTP + H2O = GDP + phosphate + H(+). Tubulin is the major constituent of microtubules, a cylinder consisting of laterally associated linear protofilaments composed of alpha- and beta-tubulin heterodimers. Microtubules grow by the addition of GTP-tubulin dimers to the microtubule end, where a stabilizing cap forms. Below the cap, tubulin dimers are in GDP-bound state, owing to GTPase activity of alpha-tubulin. This Mus musculus (Mouse) protein is Tubulin alpha-1C chain (Tuba1c).